A 261-amino-acid polypeptide reads, in one-letter code: Ribonuclease 3 (261 aa).

Positions 20–144 (YFALYRMLGF…FIGAIYLDKG (125 aa)) constitute an RNase III domain. Glutamate 62 provides a ligand contact to Mg(2+). Aspartate 66 is an active-site residue. Mg(2+) is bound by residues asparagine 130 and glutamate 133. Glutamate 133 is an active-site residue. Residues 172–241 (NFKSKLFEWC…SQMTWRKIRT (70 aa)) form the DRBM domain.

This sequence belongs to the ribonuclease III family. In terms of assembly, homodimer. Mg(2+) is required as a cofactor.

Its subcellular location is the cytoplasm. It catalyses the reaction Endonucleolytic cleavage to 5'-phosphomonoester.. Digests double-stranded RNA. Involved in the processing of primary rRNA transcript to yield the immediate precursors to the large and small rRNAs (23S and 16S). Processes some mRNAs, and tRNAs when they are encoded in the rRNA operon. Processes pre-crRNA and tracrRNA of type II CRISPR loci if present in the organism. In Azobacteroides pseudotrichonymphae genomovar. CFP2, this protein is Ribonuclease 3.